A 333-amino-acid polypeptide reads, in one-letter code: Ribosomal RNA small subunit methyltransferase H (333 aa).

S-adenosyl-L-methionine is bound by residues 36–38 (GGY), aspartate 54, phenylalanine 81, aspartate 102, and glutamine 109.

This sequence belongs to the methyltransferase superfamily. RsmH family.

Its subcellular location is the cytoplasm. The catalysed reaction is cytidine(1402) in 16S rRNA + S-adenosyl-L-methionine = N(4)-methylcytidine(1402) in 16S rRNA + S-adenosyl-L-homocysteine + H(+). Specifically methylates the N4 position of cytidine in position 1402 (C1402) of 16S rRNA. This chain is Ribosomal RNA small subunit methyltransferase H, found in Afipia carboxidovorans (strain ATCC 49405 / DSM 1227 / KCTC 32145 / OM5) (Oligotropha carboxidovorans).